The chain runs to 122 residues: Cytochrome b-c1 complex subunit 7-2, mitochondrial (122 aa).

It belongs to the UQCRB/QCR7 family. In terms of assembly, component of the ubiquinol-cytochrome c oxidoreductase (cytochrome b-c1 complex, complex III, CIII), a multisubunit enzyme composed of 10 subunits. The complex is composed of 3 respiratory subunits cytochrome b (MT-CYB), cytochrome c1 (CYC1-1 or CYC1-2) and Rieske protein (UCR1-1 or UCR1-2), 2 core protein subunits MPPalpha1 (or MPPalpha2) and MPPB, and 5 low-molecular weight protein subunits QCR7-1 (or QCR7-2), UCRQ-1 (or UCRQ-2), QCR9, UCRY and probably QCR6-1 (or QCR6-2). The complex exists as an obligatory dimer and forms supercomplexes (SCs) in the inner mitochondrial membrane with NADH-ubiquinone oxidoreductase (complex I, CI), resulting in different assemblies (supercomplexes SCI(1)III(2) and SCI(2)III(4)).

It localises to the mitochondrion inner membrane. Its function is as follows. Component of the ubiquinol-cytochrome c oxidoreductase, a multisubunit transmembrane complex that is part of the mitochondrial electron transport chain which drives oxidative phosphorylation. The respiratory chain contains 3 multisubunit complexes succinate dehydrogenase (complex II, CII), ubiquinol-cytochrome c oxidoreductase (cytochrome b-c1 complex, complex III, CIII) and cytochrome c oxidase (complex IV, CIV), that cooperate to transfer electrons derived from NADH and succinate to molecular oxygen, creating an electrochemical gradient over the inner membrane that drives transmembrane transport and the ATP synthase. The cytochrome b-c1 complex catalyzes electron transfer from ubiquinol to cytochrome c, linking this redox reaction to translocation of protons across the mitochondrial inner membrane, with protons being carried across the membrane as hydrogens on the quinol. In the process called Q cycle, 2 protons are consumed from the matrix, 4 protons are released into the intermembrane space and 2 electrons are passed to cytochrome c. The protein is Cytochrome b-c1 complex subunit 7-2, mitochondrial (QCR7-2) of Arabidopsis thaliana (Mouse-ear cress).